Reading from the N-terminus, the 163-residue chain is Calmodulin (163 aa).

Residue alanine 2 is modified to N-acetylalanine. EF-hand domains lie at 11 to 46, 47 to 82, 84 to 119, and 120 to 155; these read EQIAEFKEAFALFDKDGDGTITTKELGTVMRSLGQN, PTEAELQDMISEVDADGNGTIDFPEFLMLMARKMKE, DHEDELREAFKVFDKDGNGFISAAELRHVMTNLGEK, and LSEEEVDEMIREADVDGDGQVNYEEFVRMMTSGATD. Positions 24, 26, 28, 30, 35, 60, 62, 64, 66, 71, 97, 99, 101, 108, 133, 135, 137, 139, and 144 each coordinate Ca(2+).

The protein belongs to the calmodulin family. In terms of assembly, associates with the spoke-associated complex containing CFAP61, CFAP91 and CFAP251; the association is calcium sensitive. In terms of processing, trimethylation of Lys-119 observed in other calmodulins is absent here.

The protein localises to the cytoplasm. Its subcellular location is the cytoskeleton. The protein resides in the flagellum axoneme. Calmodulin mediates the control of a large number of enzymes, ion channels and other proteins by Ca(2+). Among the enzymes to be stimulated by the calmodulin-Ca(2+) complex are a number of protein kinases and phosphatases. This is Calmodulin from Chlamydomonas reinhardtii (Chlamydomonas smithii).